The sequence spans 343 residues: Thioredoxin domain-containing protein 15 (343 aa).

A signal peptide spans 1 to 20; sequence MQLLCWWQILLWVLGLPARG. The Extracellular portion of the chain corresponds to 21 to 304; the sequence is LEEDSGHTWQ…GPLPSTLVKT (284 aa). The span at 86–95 shows a compositional bias: basic and acidic residues; it reads EDQRSTEAHD. Residues 86 to 112 form a disordered region; that stretch reads EDQRSTEAHDGTCSAQGDEDPRCGGRE. A Thioredoxin domain is found at 162-279; it reads ERNVTGLENF…LKIFIFNQTG (118 aa). N-linked (GlcNAc...) asparagine glycosylation is found at asparagine 170, asparagine 177, asparagine 189, and asparagine 276. A helical membrane pass occupies residues 305–325; the sequence is VDWLLVFSLFFLISFIMYATI. Residues 326–343 lie on the Cytoplasmic side of the membrane; it reads RTESIRWLIPGQEQEHAE.

It localises to the cell projection. The protein localises to the cilium membrane. Its function is as follows. Acts as a positive regulator of ciliary hedgehog signaling. Required for cilia biogenesis. The protein is Thioredoxin domain-containing protein 15 (Txndc15) of Rattus norvegicus (Rat).